Consider the following 316-residue polypeptide: Protease HtpX homolog (316 aa).

A helical membrane pass occupies residues Leu16–Val36. His130 is a binding site for Zn(2+). Glu131 is an active-site residue. His134 is a binding site for Zn(2+). A run of 2 helical transmembrane segments spans residues Met145 to Ala165 and Leu174 to Ile194. Residue Glu199 participates in Zn(2+) binding. The interval Pro285–Gly316 is disordered.

The protein belongs to the peptidase M48B family. Requires Zn(2+) as cofactor.

The protein resides in the cell inner membrane. This Rhizorhabdus wittichii (strain DSM 6014 / CCUG 31198 / JCM 15750 / NBRC 105917 / EY 4224 / RW1) (Sphingomonas wittichii) protein is Protease HtpX homolog.